The following is an 87-amino-acid chain: Small ribosomal subunit protein uS17 (87 aa).

The protein belongs to the universal ribosomal protein uS17 family. As to quaternary structure, part of the 30S ribosomal subunit.

Its function is as follows. One of the primary rRNA binding proteins, it binds specifically to the 5'-end of 16S ribosomal RNA. In Geobacillus thermodenitrificans (strain NG80-2), this protein is Small ribosomal subunit protein uS17.